The primary structure comprises 281 residues: Type VI secretion system accessory component TagJ (281 aa).

Interacts with TssB1 (via N-terminus). Interacts with ClpV1.

Component of the H1 type VI (H1-T6SS) secretion system that plays a role in the release of toxins targeting both eukaryotic and prokaryotic species. Forms a stable complex with TssB1. This complex, although not crucial for the H1-T6SS function, may fine-tune the assembly of the system. Plays a role in the interaction between ClpV1 and the TssC1/TssB1 sheath. This chain is Type VI secretion system accessory component TagJ, found in Pseudomonas aeruginosa (strain ATCC 15692 / DSM 22644 / CIP 104116 / JCM 14847 / LMG 12228 / 1C / PRS 101 / PAO1).